A 368-amino-acid chain; its full sequence is 1-deoxy-D-xylulose 5-phosphate reductoisomerase (368 aa).

T10, G11, S12, I13, Q38, and N100 together coordinate NADPH. K101 contributes to the 1-deoxy-D-xylulose 5-phosphate binding site. E102 contacts NADPH. D125 is a Mn(2+) binding site. 4 residues coordinate 1-deoxy-D-xylulose 5-phosphate: S126, E127, S151, and H172. A Mn(2+)-binding site is contributed by E127. An NADPH-binding site is contributed by G178. 1-deoxy-D-xylulose 5-phosphate-binding residues include S185, N190, K191, and E194. Position 194 (E194) interacts with Mn(2+).

This sequence belongs to the DXR family. Requires Mg(2+) as cofactor. Mn(2+) serves as cofactor.

It carries out the reaction 2-C-methyl-D-erythritol 4-phosphate + NADP(+) = 1-deoxy-D-xylulose 5-phosphate + NADPH + H(+). Its pathway is isoprenoid biosynthesis; isopentenyl diphosphate biosynthesis via DXP pathway; isopentenyl diphosphate from 1-deoxy-D-xylulose 5-phosphate: step 1/6. In terms of biological role, catalyzes the NADPH-dependent rearrangement and reduction of 1-deoxy-D-xylulose-5-phosphate (DXP) to 2-C-methyl-D-erythritol 4-phosphate (MEP). The chain is 1-deoxy-D-xylulose 5-phosphate reductoisomerase from Tropheryma whipplei (strain Twist) (Whipple's bacillus).